Here is a 950-residue protein sequence, read N- to C-terminus: A disintegrin and metalloproteinase with thrombospondin motifs 15 (950 aa).

The N-terminal stretch at 1 to 18 (MLLLGISILALAWRPAGS) is a signal peptide. A propeptide spanning residues 19–212 (SEPEWEVVVP…NRRRSGRAKR (194 aa)) is cleaved from the precursor. A glycan (N-linked (GlcNAc...) asparagine) is linked at Asn141. A disordered region spans residues 144 to 172 (APEAQRHSQGAHLLQRRGAPVGPSGDPTS). The short motif at 172–179 (SRCGVASG) is the Cysteine switch element. A Zn(2+)-binding site is contributed by Cys174. The Peptidase M12B domain maps to 218–427 (RYVETLVVAD…GHGDCLLDQP (210 aa)). Cystine bridges form between Cys293-Cys345, Cys322-Cys327, Cys339-Cys422, Cys377-Cys406, Cys448-Cys470, Cys459-Cys480, Cys465-Cys499, Cys493-Cys504, Cys528-Cys565, Cys532-Cys570, and Cys543-Cys555. Residue His361 coordinates Zn(2+). Glu362 is a catalytic residue. His365 and His371 together coordinate Zn(2+). The Disintegrin domain maps to 428 to 515 (SKPITLPEDL…ERHNPNKYRV (88 aa)). The 56-residue stretch at 516–571 (DGSWAKWEPYGSCSRTCGGGVQLARRQCSNPTPANGGKYCEGVRVKYRSCNLEPCP) folds into the TSP type-1 1 domain. N-linked (GlcNAc...) asparagine glycosylation is found at Asn591, Asn623, and Asn679. Residues 701–838 (AIPAGASSID…SNQVEQPDNR (138 aa)) form a spacer region. Residues 798-822 (FYLPKEPREDKSTRPKDPRGSPVLR) form a disordered region. Basic and acidic residues predominate over residues 802-816 (KEPREDKSTRPKDPR). 2 TSP type-1 domains span residues 839-895 (PPAR…EPCP) and 896-949 (TWEL…VLRP).

Requires Zn(2+) as cofactor. Post-translationally, the precursor is cleaved by a furin endopeptidase. In terms of processing, glycosylated. Can be O-fucosylated by POFUT2 on a serine or a threonine residue found within the consensus sequence C1-X(2)-(S/T)-C2-G of the TSP type-1 repeat domains where C1 and C2 are the first and second cysteine residue of the repeat, respectively. Fucosylated repeats can then be further glycosylated by the addition of a beta-1,3-glucose residue by the glucosyltransferase, B3GALTL. Fucosylation mediates the efficient secretion of ADAMTS family members. Can be C-glycosylated with one or two mannose molecules on tryptophan residues within the consensus sequence W-X-X-W of the TPRs. Also N-glycosylated. These other glycosylations can also facilitate secretion. As to expression, in the adult colon, highly expressed in the muscularis externa (inner circular smooth muscle and outer longitudinal smooth muscle), muscularis mucosa, submucosal glands, crypt, villi epithelial cells, goblet cells and lamina propria. Expressed at perimuscular and peritendious areas in the developing limbs.

It is found in the secreted. It localises to the extracellular space. The protein localises to the extracellular matrix. Its subcellular location is the cell surface. Its function is as follows. Metalloprotease which has proteolytic activity against the proteoglycan VCAN, cleaving it at the 'Glu-1401-|-1402-Ala' site. Cleaves VCAN in the pericellular matrix surrounding myoblasts, facilitating myoblast contact and fusion which is required for skeletal muscle development and regeneration. The chain is A disintegrin and metalloproteinase with thrombospondin motifs 15 (Adamts15) from Mus musculus (Mouse).